A 445-amino-acid polypeptide reads, in one-letter code: NAD-specific glutamate dehydrogenase (445 aa).

Residue Lys124 is part of the active site.

It belongs to the Glu/Leu/Phe/Val dehydrogenases family. Homohexamer.

Its subcellular location is the cell surface. It catalyses the reaction L-glutamate + NAD(+) + H2O = 2-oxoglutarate + NH4(+) + NADH + H(+). Functionally, probably involved in degradation rather than biosynthesis of glutamate. The protein is NAD-specific glutamate dehydrogenase (gdh) of Porphyromonas gingivalis (strain ATCC 33277 / DSM 20709 / CIP 103683 / JCM 12257 / NCTC 11834 / 2561).